Reading from the N-terminus, the 171-residue chain is UPF0312 protein SAB2563 (171 aa).

The protein belongs to the UPF0312 family.

The sequence is that of UPF0312 protein SAB2563 from Staphylococcus aureus (strain bovine RF122 / ET3-1).